Reading from the N-terminus, the 221-residue chain is Inositol phosphorylceramide synthase regulatory subunit KEI1 (221 aa).

The next 4 membrane-spanning stretches (helical) occupy residues 11–31 (SFLGFMPLYLAVEIVLGISIL), 54–74 (WIAYLWSVFTLIVFSQGLYLI), 79–99 (LLVFSQICVLYTIDTISTCFF), and 154–174 (ILITLVSLIFRFYFNFILASF). The COPI vesicle-binding stretch occupies residues 176 to 221 (QELLHHPKYLVDRDDVEQNLKNKPIWKRLWAKSQKGCYKLCKNLLE).

Belongs to the KEI1 family. Component of the inositol phosphorylceramide synthase complex composed of at least AUR1 and KEI1. Interacts (via C-terminal region) with COP1 and SEC21. Note=The interaction with AUR1 seems to occur with the full-length protein before cleavage by KEX2 since both full-length and short chains of KEI1 interact with AUR1. In terms of processing, the precursor protein is cleaved into two polypeptide chains, KEI1N and KEI1C. The cleavage is performed in the Golgi apparatus by the KEX2 protease which recognizes residue Arg-135. Generation of KEX2 cleavage site may have been an accidental event in evolution without specific advantages or disadvantages in IPC synthesis.

The protein localises to the golgi apparatus membrane. Its function is as follows. Regulatory component of the inositol phosphorylceramide (ICP) synthase which catalyzes the addition of a phosphorylinositol group onto ceramide to form inositol phosphorylceramide, an essential step in sphingolipid biosynthesis. Helps the medial Golgi localization of IPC synthase in a COPI vesicle-dependent manner. In Saccharomyces cerevisiae (strain ATCC 204508 / S288c) (Baker's yeast), this protein is Inositol phosphorylceramide synthase regulatory subunit KEI1 (KEI1).